The following is a 295-amino-acid chain: Nuclear transcription factor Y subunit A-2 (295 aa).

Positions 139–165 (YVNSKQYHGIIRRRQSRAKAAAVLDQK) match the Subunit association domain (SAD) motif. The NFYA/HAP2-type DNA-binding region spans 173 to 198 (KPYMHHSRHLHALRRPRGSGGRFLNT). Residues 178 to 189 (HSRHLHALRRPR) are compositionally biased toward basic residues. Residues 178–244 (HSRHLHALRR…VVHPENGTMN (67 aa)) are disordered. The span at 197 to 209 (NTKSQNLENSGTN) shows a compositional bias: polar residues. Positions 216–233 (SMQIQSQPKPQQSNSQNS) are enriched in low complexity.

Belongs to the NFYA/HAP2 subunit family. Heterotrimeric transcription factor composed of three components, NF-YA, NF-YB and NF-YC. NF-YB and NF-YC must interact and dimerize for NF-YA association and DNA binding. Component of a heat stress-inducible transcriptional complex with NF-YA and NF-YB subunits made, at least, of NFYA2, NFYB3 and DPB3-1 in cooperation with DREB2A. As to expression, ubiquitous. Expressed in seedlings, roots, petioles, hypocotyls, reproductive organ tissues and leaves.

The protein resides in the nucleus. Stimulates the transcription of various genes by recognizing and binding to a CCAAT motif in promoters. Promotes the expression of heat stress-inducible genes by contributing to the formation of a heat stress-specific transcriptional complex with NF-Y subunits (e.g. DPB3-1, NF-YA2 and NF-YB3) and DREB2A at the promoter of target genes, thus promoting heat tolerance. The chain is Nuclear transcription factor Y subunit A-2 from Arabidopsis thaliana (Mouse-ear cress).